The chain runs to 482 residues: MKFIIKLFPEITIKSQSVRLRFIKILSTSIRNVLKQYDETLAVVRHWDHIEVRAKDENQRPVIADALTRIPGIHHILEVEDRDYTDIHHIFEQTLEAYREQLEGKTFCVRVKRRGKQDFNSQDVERYVGGGLNQHIESARVKLSHPQVTVNLEIENDKLMLVKARREGIGGYPVGTQEDVLSLISGGFDSGVSSYMLMRRGCRVHYCFFNLGGAAHEIGVRQVAHYLWNRFASSHKVRFIAIDFEPVVGEILEKVEDGQMGVVLKRMMVRAASQIAERYGVQALVTGEALGQVSSQTLTNLRLIDNASDTLILRPLISHDKEHIIKVAREIGTEDFAKTMPEYCGVISKSPTVKAIKAKIEEEEGHFDFSILDRVVSEAKNVDIRTIAEQTQEQVTEVETVAEFDADQVILDIRSNDEQEDKPLKLDQVEVKPLPFYKLSTQFGDLDQSKTYLLYCERGVMSRLQALYLLEQGFTNVKVYRP.

The THUMP domain maps to 61 to 165 (PVIADALTRI…NDKLMLVKAR (105 aa)). ATP is bound by residues 183 to 184 (LI), lysine 265, glycine 287, and glutamine 296. An intrachain disulfide couples cysteine 344 to cysteine 456. A Rhodanese domain is found at 404–482 (FDADQVILDI…GFTNVKVYRP (79 aa)). The active-site Cysteine persulfide intermediate is the cysteine 456.

Belongs to the ThiI family.

The protein localises to the cytoplasm. The catalysed reaction is [ThiI sulfur-carrier protein]-S-sulfanyl-L-cysteine + a uridine in tRNA + 2 reduced [2Fe-2S]-[ferredoxin] + ATP + H(+) = [ThiI sulfur-carrier protein]-L-cysteine + a 4-thiouridine in tRNA + 2 oxidized [2Fe-2S]-[ferredoxin] + AMP + diphosphate. It catalyses the reaction [ThiS sulfur-carrier protein]-C-terminal Gly-Gly-AMP + S-sulfanyl-L-cysteinyl-[cysteine desulfurase] + AH2 = [ThiS sulfur-carrier protein]-C-terminal-Gly-aminoethanethioate + L-cysteinyl-[cysteine desulfurase] + A + AMP + 2 H(+). The protein operates within cofactor biosynthesis; thiamine diphosphate biosynthesis. Catalyzes the ATP-dependent transfer of a sulfur to tRNA to produce 4-thiouridine in position 8 of tRNAs, which functions as a near-UV photosensor. Also catalyzes the transfer of sulfur to the sulfur carrier protein ThiS, forming ThiS-thiocarboxylate. This is a step in the synthesis of thiazole, in the thiamine biosynthesis pathway. The sulfur is donated as persulfide by IscS. The chain is tRNA sulfurtransferase from Serratia proteamaculans (strain 568).